The sequence spans 1489 residues: Chromatin-remodeling ATPase INO80 (1489 aa).

Phosphoserine is present on residues serine 65, serine 115, and serine 133. Disordered regions lie at residues 137-311 and 393-452; these read NEKD…KLSM and KRER…GLPT. Acidic residues-rich tracts occupy residues 140–164 and 214–291; these read DADE…EDEA and DENE…DFNP. Residues 301-311 are compositionally biased toward low complexity; sequence SSSSSSTKLSM. A compositionally biased stretch (basic and acidic residues) spans 393–402; that stretch reads KREREREEAL. The DBINO domain maps to 476–601; sequence IWKDMARKDS…SHFIGRKIKT (126 aa). Residue serine 610 is modified to Phosphoserine. The region spanning 718 to 890 is the Helicase ATP-binding domain; the sequence is ANLYDQGING…WALLHFIMPS (173 aa). 731–738 is a binding site for ATP; that stretch reads DEMGLGKT. The short motif at 841–844 is the DEAQ box element; the sequence is DEAQ. The region spanning 1303-1467 is the Helicase C-terminal domain; it reads KLDELLVKLK…TIEVGENDSE (165 aa). A disordered region spans residues 1456–1489; sequence IKTIEVGENDSEVTREGSKSISQDGIKEAASALA.

It belongs to the SNF2/RAD54 helicase family. Component of the chromatin-remodeling INO80 complex, at least composed of ARP4, ARP5, ARP8, RVB1, RVB2, TAF14, NHP10, IES1, IES3, IES4, IES6, ACT1, IES2, IES5 and INO80.

The protein resides in the nucleus. It catalyses the reaction ATP + H2O = ADP + phosphate + H(+). Functionally, ATPase component of the INO80 complex which remodels chromatin by shifting nucleosomes and is involved in DNA repair. Its ability to induce transcription of some phosphate-responsive genes is modulated by inositol polyphosphates. The INO80 complex is involved in DNA repair by associating with 'Ser-129' phosphorylated H2A histones as a response to DNA damage. The sequence is that of Chromatin-remodeling ATPase INO80 (INO80) from Saccharomyces cerevisiae (strain ATCC 204508 / S288c) (Baker's yeast).